The primary structure comprises 102 residues: Antimicrobial peptide 1 (102 aa).

Residues 1 to 26 form the signal peptide; sequence MASTKLFFSVITVMMLIAMASEMVNG. 3 disulfides stabilise this stretch: Cys37–Cys90, Cys47–Cys102, and Cys49–Cys75.

The protein localises to the secreted. Functionally, antimicrobial peptide which inhibits the growth of a variety of fungi, oomycetes, Gram-positive bacterial phytopatogenes and S.cerevisiae in vitro. No activity against E.coli. This Macadamia integrifolia (Macadamia nut) protein is Antimicrobial peptide 1.